The primary structure comprises 271 residues: MKTTLLKTLTPELHLVQHNDIPVPSLKTCGWNTKNFPCKGHSLSVGXPQNAKQDVLWLSEVEPFKNGNAIRGGVPICYPWFGGVKQPAHGTARIRLWQLSHYYISVHKVRLEFELFSDLNIIEAKVSMVFTDKCHLTFTHYGEESAQAALHTYFNIGDINQVEVQGLPETCFNSLNQQQENVPSPRHISENVDCIYSAENMQNQILDKSFNRTIALHHHNASQFVLWNPWHKKTSGMSETGYQKMLCLETARIHHLLEFGESLSVEISLKG.

The substrate site is built by arginine 71 and arginine 93. The active site involves histidine 151. Residue aspartate 193 coordinates substrate. Glutamate 249 is a catalytic residue.

The protein belongs to the glucose-6-phosphate 1-epimerase family.

The enzyme catalyses alpha-D-glucose 6-phosphate = beta-D-glucose 6-phosphate. The protein is Putative glucose-6-phosphate 1-epimerase of Haemophilus influenzae (strain ATCC 51907 / DSM 11121 / KW20 / Rd).